Reading from the N-terminus, the 80-residue chain is RNA-binding protein Hfq (80 aa).

In terms of domain architecture, Sm spans 10-70 (DIFLNQVRKE…ISTISPMKSV (61 aa)).

The protein belongs to the Hfq family. As to quaternary structure, homohexamer.

Its function is as follows. RNA chaperone that binds small regulatory RNA (sRNAs) and mRNAs to facilitate mRNA translational regulation in response to envelope stress, environmental stress and changes in metabolite concentrations. Also binds with high specificity to tRNAs. This Ruminiclostridium cellulolyticum (strain ATCC 35319 / DSM 5812 / JCM 6584 / H10) (Clostridium cellulolyticum) protein is RNA-binding protein Hfq.